A 204-amino-acid polypeptide reads, in one-letter code: Octanoyltransferase (204 aa).

Residues 27 to 202 (QGGEEALLLL…RFQPLLNLHL (176 aa)) enclose the BPL/LPL catalytic domain. Substrate contacts are provided by residues 65 to 72 (RGGDVTYH), 132 to 134 (SIG), and 145 to 147 (GFA). The Acyl-thioester intermediate role is filled by cysteine 163.

Belongs to the LipB family.

The protein localises to the cytoplasm. It catalyses the reaction octanoyl-[ACP] + L-lysyl-[protein] = N(6)-octanoyl-L-lysyl-[protein] + holo-[ACP] + H(+). Its pathway is protein modification; protein lipoylation via endogenous pathway; protein N(6)-(lipoyl)lysine from octanoyl-[acyl-carrier-protein]: step 1/2. Functionally, catalyzes the transfer of endogenously produced octanoic acid from octanoyl-acyl-carrier-protein onto the lipoyl domains of lipoate-dependent enzymes. Lipoyl-ACP can also act as a substrate although octanoyl-ACP is likely to be the physiological substrate. This chain is Octanoyltransferase, found in Citrifermentans bemidjiense (strain ATCC BAA-1014 / DSM 16622 / JCM 12645 / Bem) (Geobacter bemidjiensis).